Reading from the N-terminus, the 398-residue chain is Substance-K receptor (398 aa).

At 1–32 (MGTCDIVTEANISSGPESNTTGITAFSMPSWQ) the chain is on the extracellular side. N-linked (GlcNAc...) asparagine glycosylation is found at Asn-11 and Asn-19. A helical transmembrane segment spans residues 33 to 56 (LALWATAYLALVLVAVTGNAIVIW). Topologically, residues 57–69 (IILAHRRMRTVTN) are cytoplasmic. The helical transmembrane segment at 70–90 (YFIVNLALADLCMAAFNAAFN) threads the bilayer. Topologically, residues 91-107 (FVYASHNIWYFGRAFCY) are extracellular. Cys-106 and Cys-181 are disulfide-bonded. Residues 108-129 (FQNLFPITAMFVSIYSMTAIAA) traverse the membrane as a helical segment. Topologically, residues 130–149 (DRYMAIVHPFQPRLSAPSTK) are cytoplasmic. A helical membrane pass occupies residues 150–170 (AVIAGIWLVALALASPQCFYS). Residues 171-196 (TVTMDQGATKCVVAWPEDSGGKTLLL) lie on the Extracellular side of the membrane. A helical transmembrane segment spans residues 197–218 (YHLVVIALIYFLPLAVMFVAYS). The Cytoplasmic segment spans residues 219-251 (VIGLTLWRRAVPGHQAHGANLRHLQAMKKFVKT). The chain crosses the membrane as a helical span at residues 252-272 (MVLVVLTFAICWLPYHLYFIL). Residues 273–290 (GSFQEDIYCHKFIQQVYL) are Extracellular-facing. A helical membrane pass occupies residues 291 to 310 (ALFWLAMSSTMYNPIIYCCL). The Cytoplasmic portion of the chain corresponds to 311–398 (NHRFRSGFRL…LAPTKTHVEI (88 aa)). A lipid anchor (S-palmitoyl cysteine) is attached at Cys-324.

The protein belongs to the G-protein coupled receptor 1 family.

The protein localises to the cell membrane. This is a receptor for the tachykinin neuropeptide substance K (neurokinin A). It is associated with G proteins that activate a phosphatidylinositol-calcium second messenger system. The rank order of affinity of this receptor to tachykinins is: substance K &gt; neuromedin-K &gt; substance P. The polypeptide is Substance-K receptor (TACR2) (Homo sapiens (Human)).